Reading from the N-terminus, the 322-residue chain is MIFATLEHILTHICFSIILIVITIHLITLLVHEIGLYNLSEKGMIATFFCITGLLVSRWIYSGHFPLSDLYESLIFLSWSFAIIHMVPKIRNHPNSLSTITAPSTIFTQGFTTSGLLTKMHQSTILVPALQSKWLMMHVSMMLLSYAALLCGSLLSIALLVITFRKNIDILGKSNHLFIGSFSFGKTQYLNEKRSLLHLQKASFLSFRNYHRYQLTHRLDYWSYRVISLGFTFLTIGILSGAVWANEAWGSYWNWDPKETWAFITWTIFAIYSHTRTNKSLQGANSAIVASMGFLIIWICYFGVNLLGIGLHSYGSFTLTSN.

Helical transmembrane passes span 9–29 (ILTH…LITL), 43–63 (GMIA…IYSG), 70–90 (LYES…VPKI), 142–162 (MLLS…LLVI), 226–246 (VISL…VWAN), 259–274 (ETWA…IYSH), and 287–307 (AIVA…VNLL).

This sequence belongs to the CcmF/CycK/Ccl1/NrfE/CcsA family. In terms of assembly, may interact with Ccs1.

The protein localises to the plastid. It is found in the chloroplast thylakoid membrane. In terms of biological role, required during biogenesis of c-type cytochromes (cytochrome c6 and cytochrome f) at the step of heme attachment. This Chloranthus spicatus (Chulantree) protein is Cytochrome c biogenesis protein CcsA.